Reading from the N-terminus, the 565-residue chain is MTTVHTFSILLFFCSLFSASLIIAKVQHHDFVIQETPVKRLCKTRNAITVNGMFPGPTLEVNNGDTLEVKVHNRARYNITIHWHGVRQIRTGWADGPEFVTQCPIRPGKSYTYRFTIQGQEGTLWWHAHSSWLRATVYGALIIHPTPGSSFPFPKPDRQTALMLGEWWNANPVDVINQATRTGAAPNISDAYTINGQPGDLYNCSTKETVVVPINSGETSLLRVINAALNQPLFFTVANHKLTVVGADASYLKPFTTKVLMLGPGQTTDVLLTADQPPKRYYIAARAYQSAQNAPFDNTTTTAILQYKKTTTTSKPIMPVLPAFNDTNTVTSFSRKFKSLRNVVVPKTIDDNLFFTIGLGLDNCPKKFPKSRCQGLNGTRFTASMNNVSFVLPSNFSLLQAHSNGIPGVFTTDFPSKPPVKFDYTGNNISRALFQPVKGTKLYKLKYGSRVQVVLQDTNIVTSENHPIHLHGYDFYIVGEGFGNFNPKKDTSKFNLVDPPLRNTVAVPVNGWAVIRFVADNPGVWLMHCHLDVHIKWGLAMAFLVDNGVGELETLEAPPHDLPIC.

An N-terminal signal peptide occupies residues 1 to 24 (MTTVHTFSILLFFCSLFSASLIIA). Plastocyanin-like domains lie at 32-148 (VIQE…PTPG) and 158-310 (RQTA…YKKT). A glycan (N-linked (GlcNAc...) asparagine) is linked at asparagine 78. Cu cation-binding residues include histidine 82, histidine 84, histidine 127, and histidine 129. Asparagine 187, asparagine 203, asparagine 298, asparagine 325, asparagine 377, asparagine 387, asparagine 395, and asparagine 428 each carry an N-linked (GlcNAc...) asparagine glycan. The Plastocyanin-like 3 domain occupies 413-549 (DFPSKPPVKF…AMAFLVDNGV (137 aa)). Histidine 466, histidine 469, histidine 471, histidine 528, cysteine 529, histidine 530, and histidine 534 together coordinate Cu cation.

It belongs to the multicopper oxidase family. Cu cation is required as a cofactor. In terms of tissue distribution, predominantly expressed in the inflorescence stem.

The protein localises to the secreted. Its subcellular location is the extracellular space. It localises to the apoplast. It carries out the reaction 4 hydroquinone + O2 = 4 benzosemiquinone + 2 H2O. Functionally, lignin degradation and detoxification of lignin-derived products. This Arabidopsis thaliana (Mouse-ear cress) protein is Laccase-12 (LAC12).